Consider the following 312-residue polypeptide: Ribosomal protein L11 methyltransferase (312 aa).

Residues Thr-163, Gly-184, Asp-206, and Asn-248 each coordinate S-adenosyl-L-methionine.

Belongs to the methyltransferase superfamily. PrmA family.

The protein localises to the cytoplasm. The catalysed reaction is L-lysyl-[protein] + 3 S-adenosyl-L-methionine = N(6),N(6),N(6)-trimethyl-L-lysyl-[protein] + 3 S-adenosyl-L-homocysteine + 3 H(+). Functionally, methylates ribosomal protein L11. The protein is Ribosomal protein L11 methyltransferase of Clostridium botulinum (strain Okra / Type B1).